A 130-amino-acid polypeptide reads, in one-letter code: Small ribosomal subunit protein uS9 (130 aa).

The protein belongs to the universal ribosomal protein uS9 family.

This Methylococcus capsulatus (strain ATCC 33009 / NCIMB 11132 / Bath) protein is Small ribosomal subunit protein uS9.